The following is a 436-amino-acid chain: Adenosylhomocysteinase (436 aa).

Positions 62, 136, and 161 each coordinate substrate. Residue 162–164 (TTT) participates in NAD(+) binding. Substrate-binding residues include Lys191 and Asp195. NAD(+) is bound by residues Asn196, 225–230 (GFGDVG), Glu248, Asn283, 304–306 (IGH), and Asn352.

This sequence belongs to the adenosylhomocysteinase family. The cofactor is NAD(+).

Its subcellular location is the cytoplasm. The enzyme catalyses S-adenosyl-L-homocysteine + H2O = L-homocysteine + adenosine. Its pathway is amino-acid biosynthesis; L-homocysteine biosynthesis; L-homocysteine from S-adenosyl-L-homocysteine: step 1/1. May play a key role in the regulation of the intracellular concentration of adenosylhomocysteine. This is Adenosylhomocysteinase from Leptospira interrogans serogroup Icterohaemorrhagiae serovar copenhageni (strain Fiocruz L1-130).